A 296-amino-acid chain; its full sequence is MVCKVLIALCIFTAGLRVQGSPTVPLPVSLMTKSSAPVATWTTSAPHTARATTPVASATHNASVLRTTAASLTSQLPTDHREEAVTSPPLKRDVNSTDSSPAGFPSTSSDGHLAPTPEEHSLGSPEATVPATGSQSPMLLSSQAPTSATTSPATSLSESLSASVTSSHNSTVANIQPTEAPMAPASPTEEHSSSHTPTSHVTAEPVPKEKSPQDTEPGKVICESETTTPFLIMQEVENALSSGSIAAITVTVIAVVLLVFGGAAYLKIRHSSYGRLLDDHDYGSWGNYNNPLYDDS.

An N-terminal signal peptide occupies residues 1–20; it reads MVCKVLIALCIFTAGLRVQG. The Extracellular portion of the chain corresponds to 21-244; the sequence is SPTVPLPVSL…EVENALSSGS (224 aa). 2 N-linked (GlcNAc...) asparagine glycosylation sites follow: Asn-61 and Asn-95. Residues 72 to 220 are disordered; that stretch reads LTSQLPTDHR…SPQDTEPGKV (149 aa). The segment covering 78 to 95 has biased composition (basic and acidic residues); sequence TDHREEAVTSPPLKRDVN. The segment covering 96–110 has biased composition (polar residues); that stretch reads STDSSPAGFPSTSSD. Residues 139-167 show a composition bias toward low complexity; the sequence is LLSSQAPTSATTSPATSLSESLSASVTSS. Over residues 168 to 177 the composition is skewed to polar residues; sequence HNSTVANIQP. An N-linked (GlcNAc...) asparagine glycan is attached at Asn-169. Positions 206 to 217 are enriched in basic and acidic residues; the sequence is VPKEKSPQDTEP. Residues 245-265 traverse the membrane as a helical segment; that stretch reads IAAITVTVIAVVLLVFGGAAY. The Cytoplasmic segment spans residues 266–296; that stretch reads LKIRHSSYGRLLDDHDYGSWGNYNNPLYDDS. Ser-284 is subject to Phosphoserine.

This sequence belongs to the PARM family. Highly N-glycosylated and O-glycosylated.

It is found in the cell membrane. The protein localises to the golgi apparatus membrane. Its subcellular location is the endosome membrane. Functionally, may regulate TLP1 expression and telomerase activity, thus enabling certain prostatic cells to resist apoptosis. The polypeptide is Prostate androgen-regulated mucin-like protein 1 homolog (Parm1) (Mus musculus (Mouse)).